A 388-amino-acid polypeptide reads, in one-letter code: Mannitol-1-phosphate 5-dehydrogenase (388 aa).

5–16 (AVHFGGGNIGRG) contacts NAD(+). Lys-213 is a catalytic residue.

The protein belongs to the mannitol dehydrogenase family. In terms of assembly, monomer.

The enzyme catalyses D-mannitol 1-phosphate + NAD(+) = beta-D-fructose 6-phosphate + NADH + H(+). In terms of biological role, catalyzes the NAD(H)-dependent interconversion of D-fructose 6-phosphate and D-mannitol 1-phosphate in the mannitol metabolic pathway. This chain is Mannitol-1-phosphate 5-dehydrogenase, found in Penicillium rubens (strain ATCC 28089 / DSM 1075 / NRRL 1951 / Wisconsin 54-1255) (Penicillium chrysogenum).